We begin with the raw amino-acid sequence, 161 residues long: Pro-corazonin (161 aa).

Residues 1–20 form the signal peptide; it reads MMRLLLLPLFLFTLSMACMG. Q21 is modified (pyrrolidone carboxylic acid). N31 is subject to Asparagine amide. Positions 70–161 are excised as a propeptide; sequence LERCLAQLQR…SGEPSVFGKH (92 aa). 2 disordered regions span residues 93–125 and 142–161; these read NANR…TPIQ and VAGS…FGKH. The segment covering 102-117 has biased composition (low complexity); the sequence is SDSGSSRNRANNNNEN.

Belongs to the corazonin family.

The protein localises to the secreted. Cardioactive peptide. Corazonin is probably involved in the physiological regulation of the heart beat. Clock (Clk) and cycle (cyc) proteins negatively regulate Crz transcription in a cell-specific manner. The chain is Pro-corazonin from Drosophila pseudoobscura pseudoobscura (Fruit fly).